Reading from the N-terminus, the 291-residue chain is 4-hydroxy-tetrahydrodipicolinate synthase (291 aa).

T44 lines the pyruvate pocket. The active-site Proton donor/acceptor is Y132. K160 (schiff-base intermediate with substrate) is an active-site residue. A pyruvate-binding site is contributed by I202.

The protein belongs to the DapA family. As to quaternary structure, homotetramer; dimer of dimers.

It is found in the cytoplasm. It catalyses the reaction L-aspartate 4-semialdehyde + pyruvate = (2S,4S)-4-hydroxy-2,3,4,5-tetrahydrodipicolinate + H2O + H(+). It functions in the pathway amino-acid biosynthesis; L-lysine biosynthesis via DAP pathway; (S)-tetrahydrodipicolinate from L-aspartate: step 3/4. Its function is as follows. Catalyzes the condensation of (S)-aspartate-beta-semialdehyde [(S)-ASA] and pyruvate to 4-hydroxy-tetrahydrodipicolinate (HTPA). This chain is 4-hydroxy-tetrahydrodipicolinate synthase, found in Thermodesulfovibrio yellowstonii (strain ATCC 51303 / DSM 11347 / YP87).